Reading from the N-terminus, the 3898-residue chain is Genome polyprotein (3898 aa).

In terms of domain architecture, Peptidase C53 spans 1–168; the sequence is MELITNELLY…LDCPLWVTSC (168 aa). Disordered regions lie at residues 47 to 72, 172 to 209, and 223 to 245; these read LPHKRGERNVPTSLASLPKRGDCRSG, KEEGATKKKQQKPDRLEKGRMKIVPKESEKDSKTKPPD, and KKGKVKSKNTQDGLYHNKNKPPE. Residues His-49 and Cys-69 each act as for N-terminal protease activity in the active site. Over residues 172–207 the composition is skewed to basic and acidic residues; that stretch reads KEEGATKKKQQKPDRLEKGRMKIVPKESEKDSKTKP. 4 N-linked (GlcNAc...) asparagine; by host glycosylation sites follow: Asn-272, Asn-281, Asn-296, and Asn-335. Disulfide bonds link Cys-308/Cys-352 and Cys-338/Cys-339. Catalysis depends on for E(rns) glycoprotein RNase activity residues His-344, Glu-345, Lys-348, and His-349. N-linked (GlcNAc...) asparagine; by host glycosylation is found at Asn-365 and Asn-370. 2 disulfides stabilise this stretch: Cys-380/Cys-425 and Cys-384/Cys-408. Residues Asn-413, Asn-487, and Asn-597 are each glycosylated (N-linked (GlcNAc...) asparagine; by host). Topologically, residues 498–666 are lumenal; it reads ASPYCDVDRK…WNAATTTAFL (169 aa). The chain crosses the membrane as a helical span at residues 667 to 687; it reads VCLIKMVRGQVVQGILWLLLI. The Lumenal portion of the chain corresponds to 688–1035; the sequence is TGVQGHLDCK…DHHRDYFAES (348 aa). Intrachain disulfides connect Cys-696-Cys-740 and Cys-751-Cys-798. N-linked (GlcNAc...) asparagine; by host glycans are attached at residues Asn-809, Asn-878, Asn-922, and Asn-990. 8 consecutive transmembrane segments (helical) span residues 1036–1056, 1079–1099, 1108–1128, 1144–1164, 1189–1209, 1217–1237, 1247–1267, and 1281–1301; these read ILVVVVALLGGRYVLWLLVTY, NLLTHDNVEVVTYFFLLYLLL, VLLLYHILVAHPLKSVIVILL, LGQIDVCFTMVVIIIIGLIIA, PGVDAAMAVITITLLMVSYVT, WLQCILSLVSGVFLIRCLIHL, IPNWRPLTLILFYLISTTVVT, and VPILLLITTLWADFLTLILIL. Asn-1357 is a glycosylation site (N-linked (GlcNAc...) asparagine; by host). Residues 1360–1380 form a helical membrane-spanning segment; sequence MLLPLVRATLISCVSSKWQLI. A glycan (N-linked (GlcNAc...) asparagine; by host) is linked at Asn-1419. In terms of domain architecture, Peptidase C74 spans 1441-1589; it reads RNLIIKHKVR…DLEHLGWILR (149 aa). His-1447 functions as the For cysteine protease NS2 activity in the catalytic mechanism. N-linked (GlcNAc...) asparagine; by host glycosylation occurs at Asn-1451. Active-site for cysteine protease NS2 activity residues include Glu-1461 and Cys-1512. Residues 1568–1588 traverse the membrane as a helical segment; it reads MLMVGNLGEEVGDLEHLGWIL. Residues 1590 to 1763 form the Peptidase S31 domain; it reads GPAVCKKITE…LPIFEASSGR (174 aa). Active-site charge relay system; for serine protease NS3 activity residues include His-1658 and Asp-1695. Asn-1713 carries an N-linked (GlcNAc...) asparagine; by host glycan. Ser-1752 (charge relay system; for serine protease NS3 activity) is an active-site residue. Residues 1802–1960 form the Helicase ATP-binding domain; it reads ITSMNRGDFK…QKHPIEEFIA (159 aa). 1815-1822 serves as a coordination point for ATP; sequence LATGAGKT. The DEAH box signature appears at 1910-1913; it reads DEYH. Residues 1978–2143 enclose the Helicase C-terminal domain; the sequence is GLKIPVDEMK…NVTKSFREMN (166 aa). N-linked (GlcNAc...) asparagine; by host glycans are attached at residues Asn-2134, Asn-2217, Asn-2494, Asn-2682, Asn-2751, Asn-2891, and Asn-2988. Residues Thr-3499 and Leu-3501 each contribute to the GTP site. In terms of domain architecture, RdRp catalytic spans 3518-3641; sequence PVAVSFDTKA…ITEKGLGLKF (124 aa). The N-linked (GlcNAc...) asparagine; by host glycan is linked to Asn-3688. 2 residues coordinate GTP: Arg-3696 and Lys-3704. 2 N-linked (GlcNAc...) asparagine; by host glycosylation sites follow: Asn-3777 and Asn-3793.

It belongs to the pestivirus polyprotein family. As to quaternary structure, homodimer; disulfide-linked. Homodimer; disulfide-linked. Heterodimer with E1; disulfide-linked. In terms of assembly, interacts with host IFIH1/MDA5; this interaction is involved in the inhibition of IFN-beta production. Heavily glycosylated. Post-translationally, the viral RNA of pestiviruses is expressed as a single polyprotein which undergoes post-translational proteolytic processing resulting in the production of at least eleven individual proteins. The N-terminal protease cleaves itself from the nascent polyprotein autocatalytically and thereby generates the N-terminus of the adjacent viral capsid protein C. In terms of processing, cleavage between E2 and p7 is partial.

The protein localises to the virion. It is found in the host membrane. Its subcellular location is the virion membrane. It localises to the host endoplasmic reticulum membrane. The protein resides in the host cytoplasm. It catalyses the reaction Leu is conserved at position P1 for all four cleavage sites. Alanine is found at position P1' of the NS4A-NS4B cleavage site, whereas serine is found at position P1' of the NS3-NS4A, NS4B-NS5A and NS5A-NS5B cleavage sites.. The catalysed reaction is RNA(n) + a ribonucleoside 5'-triphosphate = RNA(n+1) + diphosphate. The enzyme catalyses a ribonucleoside 5'-triphosphate + H2O = a ribonucleoside 5'-diphosphate + phosphate + H(+). It carries out the reaction ATP + H2O = ADP + phosphate + H(+). It catalyses the reaction a ribonucleotidyl-ribonucleotide-RNA + H2O = a 3'-end 3'-phospho-ribonucleotide-RNA + a 5'-end dephospho-ribonucleoside-RNA + H(+). The catalysed reaction is a ribonucleotidyl-ribonucleotide-RNA = a 3'-end 2',3'-cyclophospho-ribonucleotide-RNA + a 5'-end dephospho-ribonucleoside-RNA. The enzyme catalyses a 3'-end 2',3'-cyclophospho-ribonucleotide-RNA + H2O = a 3'-end 3'-phospho-ribonucleotide-RNA + H(+). Inhibited by Zn(2+), which binds the catalytic site. Leader cysteine autoprotease that cleaves itself from the nascent polyprotein during translation of the viral mRNA. Once released, plays a role in the inhibition of host innate immune response by interacting with host IRF3 and inducing its proteasomal degradation. In terms of biological role, packages viral RNA to form a viral nucleocapsid and thereby protects viral RNA. Also plays a role in transcription regulation. Protects the incoming virus against IFN-induced effectors. Functionally, initial binding to target cell probably involves interaction of E(rns) with glycosaminoglycans. Also possesses intrinsic ribonuclease (RNase) activity that can inhibit the production of type I interferon and assist in the development of persistent infections. Its function is as follows. E1 and/or E2 are probably responsible of cell attachment with CD46 and subsequent fusion after internalization of the virion by endocytosis. E1 and/or E2 are probably responsible of cell attachment with CD46 and subsequent fusion after internalization of the virion by endocytosis. Probably functions as a coeffector of fusion providing structural integrity to the fusion complex and possibly controlling exposure of the fusion motif in E1. In terms of biological role, plays an essential role in the virus replication cycle by acting as a viroporin. Forms ion conductive pores, which alters the cell permeability allowing the transport of ions and other small molecules. Forms a leader sequence to properly orient NS2 in the membrane. Functionally, uncleaved NS2-3 is required for production of infectious virus. Its function is as follows. Plays a role in the regulation of viral RNA replication. Multifunctional protein that contains an N-terminal protease and a C-terminal helicase, playing essential roles in viral polyprotein processing and viral genome replication. The chymotrypsin-like serine protease activity utilizes NS4A as an essential cofactor and catalyzes the cleavage of the polyprotein leading to the release of NS4A, NS4B, NS5A, and NS5B. Interacts with NS5B to enhance RNA-dependent RNA polymerase activity. In terms of biological role, acts as a cofactor for the NS3 protease activity. Functionally, induces a specific membrane alteration that serves as a scaffold for the virus replication complex. Plays a role in the inhibition of host innate immune response by inhibiting RIGI/IFIH1-mediated IFN-beta production. Its function is as follows. Replicates the viral (+) and (-) genome. Initiates the primer-independent RNA replication via a de novo mechanism requiring GTP. The protein is Genome polyprotein of Bos taurus (Bovine).